The sequence spans 122 residues: Large ribosomal subunit protein uL14c (122 aa).

This sequence belongs to the universal ribosomal protein uL14 family. As to quaternary structure, part of the 50S ribosomal subunit.

It is found in the plastid. The protein resides in the chloroplast. Functionally, binds to 23S rRNA. The sequence is that of Large ribosomal subunit protein uL14c from Buxus microphylla (Littleleaf boxwood).